The chain runs to 339 residues: Protein H339R (339 aa).

This sequence belongs to the asfivirus H339R family. In terms of assembly, interacts with host NACA (alpha chain of nascent polypeptide-associated complex).

It localises to the host cytoplasm. It is found in the host nucleus. The sequence is that of Protein H339R from African swine fever virus (isolate Tick/South Africa/Pretoriuskop Pr4/1996) (ASFV).